The sequence spans 430 residues: tRNA pseudouridine synthase Pus10 (430 aa).

Asp253 (nucleophile) is an active-site residue. Positions 320 and 392 each coordinate substrate.

Belongs to the pseudouridine synthase Pus10 family.

The enzyme catalyses uridine(54) in tRNA = pseudouridine(54) in tRNA. It catalyses the reaction uridine(55) in tRNA = pseudouridine(55) in tRNA. Its function is as follows. Responsible for synthesis of pseudouridine from uracil-54 and uracil-55 in the psi GC loop of transfer RNAs. The sequence is that of tRNA pseudouridine synthase Pus10 from Ignisphaera aggregans (strain DSM 17230 / JCM 13409 / AQ1.S1).